The primary structure comprises 355 residues: Guanine nucleotide-binding protein G(q) subunit alpha (355 aa).

A lipid anchor (S-palmitoyl cysteine) is attached at Cys3. The 324-residue stretch at 32–355 (KEIKLLLLGT…QHITEVVPGL (324 aa)) folds into the G-alpha domain. A G1 motif region spans residues 35–48 (KLLLLGTGESGKST). GTP contacts are provided by residues 40 to 47 (GTGESGKS), 174 to 180 (LRVRVPT), 199 to 203 (DVGGQ), 269 to 272 (NKKD), and Ala326. Ser47 and Thr180 together coordinate Mg(2+). The tract at residues 172-180 (DVLRVRVPT) is G2 motif. The interval 195–204 (FKMVDVGGQR) is G3 motif. The tract at residues 265-272 (ILFLNKKD) is G4 motif. Residues 324-329 (TCATDT) are G5 motif.

It belongs to the G-alpha family. G(q) subfamily. In terms of assembly, g proteins are composed of 3 units; alpha, beta and gamma. The alpha chain contains the guanine nucleotide binding site.

Its function is as follows. Guanine nucleotide-binding proteins (G proteins) are involved as modulators or transducers in various transmembrane signaling systems. This is Guanine nucleotide-binding protein G(q) subunit alpha from Geodia cydonium (Sponge).